Consider the following 190-residue polypeptide: Protein GrpE (190 aa).

Over residues 1 to 18 (MTETPNTSSEEIQTSEPS) the composition is skewed to polar residues. The segment at 1–21 (MTETPNTSSEEIQTSEPSPDN) is disordered.

This sequence belongs to the GrpE family. Homodimer.

The protein localises to the cytoplasm. Its function is as follows. Participates actively in the response to hyperosmotic and heat shock by preventing the aggregation of stress-denatured proteins, in association with DnaK and GrpE. It is the nucleotide exchange factor for DnaK and may function as a thermosensor. Unfolded proteins bind initially to DnaJ; upon interaction with the DnaJ-bound protein, DnaK hydrolyzes its bound ATP, resulting in the formation of a stable complex. GrpE releases ADP from DnaK; ATP binding to DnaK triggers the release of the substrate protein, thus completing the reaction cycle. Several rounds of ATP-dependent interactions between DnaJ, DnaK and GrpE are required for fully efficient folding. This is Protein GrpE from Chlamydia trachomatis serovar L2 (strain ATCC VR-902B / DSM 19102 / 434/Bu).